Here is a 292-residue protein sequence, read N- to C-terminus: Outer membrane protein assembly factor BamD (292 aa).

The N-terminal stretch at 1-26 is a signal peptide; the sequence is MIQRPTFFTPTHLLAMLLATFVLITG. C27 is lipidated: N-palmitoyl cysteine. C27 carries S-diacylglycerol cysteine lipidation.

This sequence belongs to the BamD family. In terms of assembly, part of the Bam complex.

The protein localises to the cell outer membrane. Functionally, part of the outer membrane protein assembly complex, which is involved in assembly and insertion of beta-barrel proteins into the outer membrane. The protein is Outer membrane protein assembly factor BamD of Xylella fastidiosa (strain 9a5c).